The primary structure comprises 590 residues: Arginine--tRNA ligase (590 aa).

The 'HIGH' region signature appears at A138 to H148.

Belongs to the class-I aminoacyl-tRNA synthetase family. In terms of assembly, monomer.

It localises to the cytoplasm. The catalysed reaction is tRNA(Arg) + L-arginine + ATP = L-arginyl-tRNA(Arg) + AMP + diphosphate. The chain is Arginine--tRNA ligase from Orientia tsutsugamushi (strain Ikeda) (Rickettsia tsutsugamushi).